The chain runs to 369 residues: Small ribosomal subunit biogenesis GTPase RsgA (369 aa).

In terms of domain architecture, CP-type G spans 88–246 (RTVLERPPVA…LADTPGFNQP (159 aa)). Residues 137–140 (NKQD) and 188–196 (GPSGVGKSS) contribute to the GTP site. The Zn(2+) site is built by Cys271, Cys276, His278, and Cys284. Residues 307 to 369 (QNPENSRETD…DLDNLQEDWE (63 aa)) form a disordered region. The span at 359 to 369 (TDLDNLQEDWE) shows a compositional bias: acidic residues.

The protein belongs to the TRAFAC class YlqF/YawG GTPase family. RsgA subfamily. As to quaternary structure, monomer. Associates with 30S ribosomal subunit, binds 16S rRNA. It depends on Zn(2+) as a cofactor.

Its subcellular location is the cytoplasm. One of several proteins that assist in the late maturation steps of the functional core of the 30S ribosomal subunit. Helps release RbfA from mature subunits. May play a role in the assembly of ribosomal proteins into the subunit. Circularly permuted GTPase that catalyzes slow GTP hydrolysis, GTPase activity is stimulated by the 30S ribosomal subunit. The polypeptide is Small ribosomal subunit biogenesis GTPase RsgA (Synechocystis sp. (strain ATCC 27184 / PCC 6803 / Kazusa)).